We begin with the raw amino-acid sequence, 346 residues long: Phosphoribosylformylglycinamidine cyclo-ligase (346 aa).

The protein belongs to the AIR synthase family.

The protein localises to the cytoplasm. The catalysed reaction is 2-formamido-N(1)-(5-O-phospho-beta-D-ribosyl)acetamidine + ATP = 5-amino-1-(5-phospho-beta-D-ribosyl)imidazole + ADP + phosphate + H(+). It functions in the pathway purine metabolism; IMP biosynthesis via de novo pathway; 5-amino-1-(5-phospho-D-ribosyl)imidazole from N(2)-formyl-N(1)-(5-phospho-D-ribosyl)glycinamide: step 2/2. The polypeptide is Phosphoribosylformylglycinamidine cyclo-ligase (Bacillus velezensis (strain DSM 23117 / BGSC 10A6 / LMG 26770 / FZB42) (Bacillus amyloliquefaciens subsp. plantarum)).